The following is a 522-amino-acid chain: Ribonuclease Y (522 aa).

Residues Ser7–Ile27 form a helical membrane-spanning segment. The 61-residue stretch at Thr212–Leu272 folds into the KH domain. The 94-residue stretch at Val338–Ser431 folds into the HD domain.

It belongs to the RNase Y family.

It localises to the cell membrane. Its function is as follows. Endoribonuclease that initiates mRNA decay. This chain is Ribonuclease Y, found in Rhodopirellula baltica (strain DSM 10527 / NCIMB 13988 / SH1).